The chain runs to 919 residues: UPF0182 protein SUN_1015 (919 aa).

7 consecutive transmembrane segments (helical) span residues 8 to 28 (IIIT…VDYY), 51 to 71 (ILSF…HIHF), 102 to 122 (AVAW…GSYA), 158 to 178 (VYQF…IGVL), 207 to 227 (LTAF…YNIL), 246 to 266 (IPAY…LFFY), and 274 to 294 (VIVS…WIYP).

Belongs to the UPF0182 family.

The protein localises to the cell membrane. In Sulfurovum sp. (strain NBC37-1), this protein is UPF0182 protein SUN_1015.